The sequence spans 242 residues: DNA repair protein RecO (242 aa).

Belongs to the RecO family.

Involved in DNA repair and RecF pathway recombination. The protein is DNA repair protein RecO of Xanthobacter autotrophicus (strain ATCC BAA-1158 / Py2).